Here is an 881-residue protein sequence, read N- to C-terminus: Alanine--tRNA ligase (881 aa).

Residues histidine 566, histidine 570, cysteine 668, and histidine 672 each contribute to the Zn(2+) site.

The protein belongs to the class-II aminoacyl-tRNA synthetase family. Zn(2+) serves as cofactor.

The protein resides in the cytoplasm. The catalysed reaction is tRNA(Ala) + L-alanine + ATP = L-alanyl-tRNA(Ala) + AMP + diphosphate. Its function is as follows. Catalyzes the attachment of alanine to tRNA(Ala) in a two-step reaction: alanine is first activated by ATP to form Ala-AMP and then transferred to the acceptor end of tRNA(Ala). Also edits incorrectly charged Ser-tRNA(Ala) and Gly-tRNA(Ala) via its editing domain. This chain is Alanine--tRNA ligase, found in Frankia casuarinae (strain DSM 45818 / CECT 9043 / HFP020203 / CcI3).